A 51-amino-acid polypeptide reads, in one-letter code: Small ribosomal subunit protein eS31 (51 aa).

Zn(2+) is bound by residues C21, C24, C39, and C42. The C4-type zinc finger occupies 21 to 42 (CVRCSNGVFMADHGDRYACGKC).

It belongs to the eukaryotic ribosomal protein eS31 family. As to quaternary structure, part of the 30S ribosomal subunit. It depends on Zn(2+) as a cofactor.

The chain is Small ribosomal subunit protein eS31 from Methanothermobacter thermautotrophicus (strain ATCC 29096 / DSM 1053 / JCM 10044 / NBRC 100330 / Delta H) (Methanobacterium thermoautotrophicum).